The chain runs to 252 residues: NAC domain-containing protein 23 (252 aa).

The NAC domain occupies 12 to 177; sequence MPPGFRFQPT…EMVLCRISNK (166 aa). Residues 110-183 mediate DNA binding; it reads TAVKRRFVFY…ISNKDLPKPP (74 aa). The tract at residues 225–252 is disordered; the sequence is VDDAAAGTDDPGDLDEEIDDSMQRNHGG. The segment covering 234–244 has biased composition (acidic residues); that stretch reads DPGDLDEEIDD.

In terms of assembly, forms heterodimers with NAC26. In terms of tissue distribution, expressed in stems and panicles. Expressed in developing endosperm.

The protein localises to the nucleus. It is found in the cytoplasm. Its function is as follows. Transcription factor involved in the regulation of seed size. Binds to DNA-specific sequences of CLPD1 and OAT promoters in vitro. In Oryza sativa subsp. japonica (Rice), this protein is NAC domain-containing protein 23.